Reading from the N-terminus, the 280-residue chain is Diaminopimelate epimerase (280 aa).

2 residues coordinate substrate: Asn-14 and Asn-67. Cys-76 functions as the Proton donor in the catalytic mechanism. Substrate is bound by residues 77-78 (GN), Asn-193, and 210-211 (ER). The active-site Proton acceptor is the Cys-220. Residue 221 to 222 (GT) coordinates substrate.

This sequence belongs to the diaminopimelate epimerase family. As to quaternary structure, homodimer.

It is found in the cytoplasm. The enzyme catalyses (2S,6S)-2,6-diaminopimelate = meso-2,6-diaminopimelate. The protein operates within amino-acid biosynthesis; L-lysine biosynthesis via DAP pathway; DL-2,6-diaminopimelate from LL-2,6-diaminopimelate: step 1/1. In terms of biological role, catalyzes the stereoinversion of LL-2,6-diaminopimelate (L,L-DAP) to meso-diaminopimelate (meso-DAP), a precursor of L-lysine. This chain is Diaminopimelate epimerase, found in Methanocella arvoryzae (strain DSM 22066 / NBRC 105507 / MRE50).